A 142-amino-acid chain; its full sequence is ATP synthase epsilon chain, chloroplastic (142 aa).

Belongs to the ATPase epsilon chain family. As to quaternary structure, F-type ATPases have 2 components, CF(1) - the catalytic core - and CF(0) - the membrane proton channel. CF(1) has five subunits: alpha(3), beta(3), gamma(1), delta(1), epsilon(1). CF(0) has three main subunits: a, b and c.

The protein resides in the plastid. It localises to the chloroplast thylakoid membrane. In terms of biological role, produces ATP from ADP in the presence of a proton gradient across the membrane. The polypeptide is ATP synthase epsilon chain, chloroplastic (Ostreococcus tauri).